The following is a 305-amino-acid chain: Tyrosine recombinase XerC (305 aa).

In terms of domain architecture, Core-binding (CB) spans 4–95; the sequence is TSIQELINKW…AVKNFYKFLE (92 aa). The Tyr recombinase domain occupies 116–298; the sequence is LLPKSLSEDD…SIKHLVSVYT (183 aa). Catalysis depends on residues Arg159, Lys182, His250, Arg253, and His276. Residue Tyr285 is the O-(3'-phospho-DNA)-tyrosine intermediate of the active site.

This sequence belongs to the 'phage' integrase family. XerC subfamily. In terms of assembly, forms a cyclic heterotetrameric complex composed of two molecules of XerC and two molecules of XerD.

The protein resides in the cytoplasm. Site-specific tyrosine recombinase, which acts by catalyzing the cutting and rejoining of the recombining DNA molecules. The XerC-XerD complex is essential to convert dimers of the bacterial chromosome into monomers to permit their segregation at cell division. It also contributes to the segregational stability of plasmids. The sequence is that of Tyrosine recombinase XerC from Rickettsia canadensis (strain McKiel).